The following is a 414-amino-acid chain: F-box protein At3g26010 (414 aa).

One can recognise an F-box domain in the interval 5 to 52 (NRTIHLTDAIWTEILARLPLRIIARFKSVSKTWKSTIESVYFRRLFVS).

The protein is F-box protein At3g26010 of Arabidopsis thaliana (Mouse-ear cress).